The chain runs to 508 residues: Small ribosomal subunit protein mS47 (508 aa).

This sequence belongs to the enoyl-CoA hydratase/isomerase family. Mitochondrion-specific ribosomal protein mS47 subfamily. In terms of assembly, component of the mitochondrial small ribosomal subunit (mt-SSU). Mature N.crassa 74S mitochondrial ribosomes consist of a small (37S) and a large (54S) subunit. The 37S small subunit contains a 16S ribosomal RNA (16S mt-rRNA) and 32 different proteins. The 54S large subunit contains a 23S rRNA (23S mt-rRNA) and 42 different proteins. mS47 forms a protuberance of the N.crassa mitoribosome and retains a solvent-exposed cavity liekly capable of accommodating a substrate, in accordance with it being an active enzyme as well as an integral constituent of the mitoribosome.

The protein resides in the mitochondrion. The catalysed reaction is 3-hydroxy-2-methylpropanoyl-CoA + H2O = 3-hydroxy-2-methylpropanoate + CoA + H(+). Its function is as follows. Component of the mitochondrial ribosome (mitoribosome), a dedicated translation machinery responsible for the synthesis of mitochondrial genome-encoded proteins, including at least some of the essential transmembrane subunits of the mitochondrial respiratory chain. The mitoribosomes are attached to the mitochondrial inner membrane and translation products are cotranslationally integrated into the membrane. mS47 has enzymatic activity in vitro, and is able to catalyze the specific hydrolysis of 3-hydroxyisobutyryl-CoA (HIBYL-CoA). However, because the turnover rate of mS47 is only a fraction of that of the homologous mammalian enzyme, the physiological function of this activity remains unclear. The polypeptide is Small ribosomal subunit protein mS47 (ehd3) (Neurospora crassa (strain ATCC 24698 / 74-OR23-1A / CBS 708.71 / DSM 1257 / FGSC 987)).